The following is a 122-amino-acid chain: Small ribosomal subunit protein uS13 (122 aa).

Residues 99-122 are disordered; sequence RGQRTHTNARTRKGPAKAIAGKKK.

The protein belongs to the universal ribosomal protein uS13 family. As to quaternary structure, part of the 30S ribosomal subunit. Forms a loose heterodimer with protein S19. Forms two bridges to the 50S subunit in the 70S ribosome.

In terms of biological role, located at the top of the head of the 30S subunit, it contacts several helices of the 16S rRNA. In the 70S ribosome it contacts the 23S rRNA (bridge B1a) and protein L5 of the 50S subunit (bridge B1b), connecting the 2 subunits; these bridges are implicated in subunit movement. Contacts the tRNAs in the A and P-sites. The polypeptide is Small ribosomal subunit protein uS13 (Rhizobium etli (strain ATCC 51251 / DSM 11541 / JCM 21823 / NBRC 15573 / CFN 42)).